Reading from the N-terminus, the 97-residue chain is Small ribosomal subunit protein uS19 (97 aa).

The protein belongs to the universal ribosomal protein uS19 family.

Protein S19 forms a complex with S13 that binds strongly to the 16S ribosomal RNA. This is Small ribosomal subunit protein uS19 from Salinibacter ruber (strain DSM 13855 / M31).